We begin with the raw amino-acid sequence, 529 residues long: Membrane-bound lytic murein transglycosylase F (529 aa).

The first 27 residues, 1-27 (MPIFNLHQLRNFLFIIATTLFLSACQI), serve as a signal peptide directing secretion. Residues 28–287 (ESKPTSELDQ…RLEEKYIGHI (260 aa)) are non-LT domain. Residues 288–529 (GSFDYVDTRA…QATLTTEVQP (242 aa)) are LT domain. Residue Glu332 is part of the active site. The disordered stretch occupies residues 510–529 (EALSPDVGVSQATLTTEVQP). Residues 519–529 (SQATLTTEVQP) are compositionally biased toward polar residues.

It in the N-terminal section; belongs to the bacterial solute-binding protein 3 family. In the C-terminal section; belongs to the transglycosylase Slt family.

It is found in the cell outer membrane. The enzyme catalyses Exolytic cleavage of the (1-&gt;4)-beta-glycosidic linkage between N-acetylmuramic acid (MurNAc) and N-acetylglucosamine (GlcNAc) residues in peptidoglycan, from either the reducing or the non-reducing ends of the peptidoglycan chains, with concomitant formation of a 1,6-anhydrobond in the MurNAc residue.. Functionally, murein-degrading enzyme that degrades murein glycan strands and insoluble, high-molecular weight murein sacculi, with the concomitant formation of a 1,6-anhydromuramoyl product. Lytic transglycosylases (LTs) play an integral role in the metabolism of the peptidoglycan (PG) sacculus. Their lytic action creates space within the PG sacculus to allow for its expansion as well as for the insertion of various structures such as secretion systems and flagella. The sequence is that of Membrane-bound lytic murein transglycosylase F from Vibrio vulnificus (strain CMCP6).